Here is a 127-residue protein sequence, read N- to C-terminus: Ribonuclease P protein component (127 aa).

This sequence belongs to the RnpA family. Consists of a catalytic RNA component (M1 or rnpB) and a protein subunit.

The catalysed reaction is Endonucleolytic cleavage of RNA, removing 5'-extranucleotides from tRNA precursor.. Functionally, RNaseP catalyzes the removal of the 5'-leader sequence from pre-tRNA to produce the mature 5'-terminus. It can also cleave other RNA substrates such as 4.5S RNA. The protein component plays an auxiliary but essential role in vivo by binding to the 5'-leader sequence and broadening the substrate specificity of the ribozyme. The protein is Ribonuclease P protein component of Rippkaea orientalis (strain PCC 8801 / RF-1) (Cyanothece sp. (strain PCC 8801)).